Consider the following 122-residue polypeptide: uncharacterized protein (122 aa).

The HIT domain maps to 10–120 (VFARILRGEI…AGRRLGPMIT (111 aa)). Residues 104-108 (HLHIH) carry the Histidine triad motif motif.

This is an uncharacterized protein from Azospirillum brasilense.